Here is a 108-residue protein sequence, read N- to C-terminus: Succinate dehydrogenase assembly factor 4, mitochondrial (108 aa).

The N-terminal 20 residues, 1–20 (MTPSRLPWLLSWVSATAWRA), are a transit peptide targeting the mitochondrion. The tract at residues 31 to 108 (RKTSSSQGGK…WERKGRCIDF (78 aa)) is disordered. 2 stretches are compositionally biased toward basic and acidic residues: residues 52–87 (KLPE…EKGG) and 95–108 (RYGD…CIDF).

This sequence belongs to the SDHAF4 family. Interacts with SDHA in its FAD-bound form.

The protein localises to the mitochondrion matrix. Functionally, plays an essential role in the assembly of succinate dehydrogenase (SDH), an enzyme complex (also referred to as respiratory complex II) that is a component of both the tricarboxylic acid (TCA) cycle and the mitochondrial electron transport chain, and which couples the oxidation of succinate to fumarate with the reduction of ubiquinone (coenzyme Q) to ubiquinol. Binds to the flavoprotein subunit SDHA in its FAD-bound form, blocking the generation of excess reactive oxygen species (ROS) and facilitating its assembly with the iron-sulfur protein subunit SDHB into the SDH catalytic dimer. In Homo sapiens (Human), this protein is Succinate dehydrogenase assembly factor 4, mitochondrial.